The primary structure comprises 1147 residues: Nitric oxide synthase, inducible (1147 aa).

Residues 22-51 (KDINNNVEKTPGAIPSPTTQDDPKSHKHQN) form a disordered region. Residues 23 to 27 (DINNN) carry the DINNN-motif; mediates interaction with SPSB1, SPSB2 and SPSB4 motif. The Zn(2+) site is built by cysteine 107 and cysteine 112. A (6R)-L-erythro-5,6,7,8-tetrahydrobiopterin-binding site is contributed by serine 115. Cysteine 197 lines the heme b pocket. Positions 260, 369, 370, and 374 each coordinate L-arginine. 4 residues coordinate (6R)-L-erythro-5,6,7,8-tetrahydrobiopterin: arginine 378, isoleucine 459, tryptophan 460, and phenylalanine 473. Tyrosine 488 serves as a coordination point for heme b. Positions 512–532 (FTVLVKAVFFASVLMRKVMAS) are calmodulin-binding. One can recognise a Flavodoxin-like domain in the interval 536-674 (ATVLFATETG…AFRSWAVQTF (139 aa)). Residues threonine 542, glutamate 543, threonine 544, lysine 546, and serine 547 each contribute to the FMN site. At threonine 564 the chain carries Phosphothreonine. Tyrosine 572 bears the Phosphotyrosine mark. Residues serine 588, threonine 589, serine 625, cysteine 632, glutamate 658, and glutamine 662 each contribute to the FMN site. In terms of domain architecture, FAD-binding FR-type spans 727 to 967 (KNVFTMRLKS…VRSVSGFQLP (241 aa)). Arginine 747 contacts NADP(+). 6 residues coordinate FAD: histidine 769, arginine 903, tyrosine 905, serine 906, threonine 921, and alanine 923. Threonine 926 contributes to the NADP(+) binding site. Tyrosine 927, valine 940, cysteine 941, and serine 942 together coordinate FAD. 8 residues coordinate NADP(+): threonine 981, arginine 1014, serine 1043, arginine 1044, lysine 1050, tyrosine 1052, glutamine 1054, and aspartate 1087.

It belongs to the NOS family. As to quaternary structure, homodimer. Interacts with NHERF1. Interacts with GAPDH; induced by oxidatively-modified low-densitity lipoprotein (LDL(ox)). Interacts with S100A8 and S100A9 to form the iNOS-S100A8/9 transnitrosylase complex. Interacts with SPSB1, SPSB2 and SPSB4. Interacts with ELOC and CUL5 in the presence of SPSB1 or SPSB2 or SPSB4. Forms a complex with ASL, ASS1 and HSP90AA1; the complex regulates cell-autonomous L-arginine synthesis and citrulline recycling while channeling extracellular L-arginine to nitric oxide synthesis pathway. Requires heme b as cofactor. FAD is required as a cofactor. The cofactor is FMN. It depends on (6R)-L-erythro-5,6,7,8-tetrahydrobiopterin as a cofactor. In terms of processing, polyubiquitinated; mediated by SPSB1, SPSB2 and SPSB4, leading to proteasomal degradation. In normal kidney, expressed primarily in the medullary thick ascending limb, with minor amounts in the medullary collecting duct and vasa recta bundle.

It is found in the cytoplasm. Its subcellular location is the cytosol. The catalysed reaction is 2 L-arginine + 3 NADPH + 4 O2 + H(+) = 2 L-citrulline + 2 nitric oxide + 3 NADP(+) + 4 H2O. Its activity is regulated as follows. Not stimulated by calcium/calmodulin. Aspirin inhibits expression and function of this enzyme and effects may be exerted at the level of translational/post-translational modification and directly on the catalytic activity. Produces nitric oxide (NO) which is a messenger molecule with diverse functions throughout the body. In macrophages, NO mediates tumoricidal and bactericidal actions. Also has nitrosylase activity and mediates cysteine S-nitrosylation of cytoplasmic target proteins such PTGS2/COX2. As component of the iNOS-S100A8/9 transnitrosylase complex involved in the selective inflammatory stimulus-dependent S-nitrosylation of GAPDH implicated in regulation of the GAIT complex activity and probably multiple targets including ANXA5, EZR, MSN and VIM. Involved in inflammation, enhances the synthesis of pro-inflammatory mediators such as IL6 and IL8. This chain is Nitric oxide synthase, inducible (Nos2), found in Rattus norvegicus (Rat).